The chain runs to 164 residues: Ribosome maturation factor RimP (164 aa).

Belongs to the RimP family.

It is found in the cytoplasm. In terms of biological role, required for maturation of 30S ribosomal subunits. The chain is Ribosome maturation factor RimP from Thermodesulfovibrio yellowstonii (strain ATCC 51303 / DSM 11347 / YP87).